We begin with the raw amino-acid sequence, 264 residues long: Thymidylate synthase (264 aa).

Residue Arg-21 participates in dUMP binding. (6R)-5,10-methylene-5,6,7,8-tetrahydrofolate is bound at residue His-51. A dUMP-binding site is contributed by 126–127 (RR). The active-site Nucleophile is Cys-146. Residues 166–169 (RSAD), Asn-177, and 207–209 (HLY) each bind dUMP. Asp-169 contacts (6R)-5,10-methylene-5,6,7,8-tetrahydrofolate. Ala-263 lines the (6R)-5,10-methylene-5,6,7,8-tetrahydrofolate pocket.

Belongs to the thymidylate synthase family. Bacterial-type ThyA subfamily. In terms of assembly, homodimer.

It localises to the cytoplasm. The enzyme catalyses dUMP + (6R)-5,10-methylene-5,6,7,8-tetrahydrofolate = 7,8-dihydrofolate + dTMP. The protein operates within pyrimidine metabolism; dTTP biosynthesis. Functionally, catalyzes the reductive methylation of 2'-deoxyuridine-5'-monophosphate (dUMP) to 2'-deoxythymidine-5'-monophosphate (dTMP) while utilizing 5,10-methylenetetrahydrofolate (mTHF) as the methyl donor and reductant in the reaction, yielding dihydrofolate (DHF) as a by-product. This enzymatic reaction provides an intracellular de novo source of dTMP, an essential precursor for DNA biosynthesis. This Chromobacterium violaceum (strain ATCC 12472 / DSM 30191 / JCM 1249 / CCUG 213 / NBRC 12614 / NCIMB 9131 / NCTC 9757 / MK) protein is Thymidylate synthase.